Here is a 155-residue protein sequence, read N- to C-terminus: MFTIDFSDHTGLVETSWFDQIDQLLTFAKKKENIHNDAELSVTFVDKDEIQNINKVYRDKDKVTDVISFALEEDEPEIDFNDFDIPRVLGDIIICTDVAKEQSESYGHSFERELGFLALHGFLHLLGYDHMNDNDEKEMFGRQDAILNEFGLTRN.

Zn(2+) contacts are provided by His120, His124, and His130.

This sequence belongs to the endoribonuclease YbeY family. It depends on Zn(2+) as a cofactor.

It localises to the cytoplasm. In terms of biological role, single strand-specific metallo-endoribonuclease involved in late-stage 70S ribosome quality control and in maturation of the 3' terminus of the 16S rRNA. This is Endoribonuclease YbeY from Staphylococcus epidermidis (strain ATCC 12228 / FDA PCI 1200).